We begin with the raw amino-acid sequence, 149 residues long: Low molecular weight protein-tyrosine-phosphatase Wzb (149 aa).

Cysteine 9 serves as the catalytic Nucleophile. The active site involves arginine 15. The active-site Proton donor is aspartate 115.

This sequence belongs to the low molecular weight phosphotyrosine protein phosphatase family.

It catalyses the reaction O-phospho-L-tyrosyl-[protein] + H2O = L-tyrosyl-[protein] + phosphate. The protein operates within glycan metabolism; exopolysaccharide biosynthesis. Functionally, dephosphorylates Wzc. Required for the extracellular polysaccharide colanic acid synthesis. Probably involved in the export of colanic acid from the cell to medium. Involved in protection of cells against contact-dependent growth inhibition (CDI). The sequence is that of Low molecular weight protein-tyrosine-phosphatase Wzb (wzb) from Salmonella typhimurium (strain LT2 / SGSC1412 / ATCC 700720).